The primary structure comprises 208 residues: dITP/XTP pyrophosphatase (208 aa).

11-16 is a substrate binding site; sequence SRNWKK. D76 (proton acceptor) is an active-site residue. Mg(2+) is bound at residue D76. Residues S77, 158–161, K184, and 189–190 contribute to the substrate site; these read FGYD and HR.

It belongs to the HAM1 NTPase family. Homodimer. It depends on Mg(2+) as a cofactor.

The catalysed reaction is XTP + H2O = XMP + diphosphate + H(+). It carries out the reaction dITP + H2O = dIMP + diphosphate + H(+). It catalyses the reaction ITP + H2O = IMP + diphosphate + H(+). Pyrophosphatase that catalyzes the hydrolysis of nucleoside triphosphates to their monophosphate derivatives, with a high preference for the non-canonical purine nucleotides XTP (xanthosine triphosphate), dITP (deoxyinosine triphosphate) and ITP. Seems to function as a house-cleaning enzyme that removes non-canonical purine nucleotides from the nucleotide pool, thus preventing their incorporation into DNA/RNA and avoiding chromosomal lesions. This is dITP/XTP pyrophosphatase from Mycobacterium leprae (strain TN).